The primary structure comprises 266 residues: Glucosamine-6-phosphate deaminase (266 aa).

Aspartate 72 functions as the Proton acceptor; for enolization step in the catalytic mechanism. Residue aspartate 141 is the For ring-opening step of the active site. The Proton acceptor; for ring-opening step role is filled by histidine 143. The active-site For ring-opening step is the glutamate 148.

It belongs to the glucosamine/galactosamine-6-phosphate isomerase family. NagB subfamily. Homohexamer.

It carries out the reaction alpha-D-glucosamine 6-phosphate + H2O = beta-D-fructose 6-phosphate + NH4(+). Its pathway is amino-sugar metabolism; N-acetylneuraminate degradation; D-fructose 6-phosphate from N-acetylneuraminate: step 5/5. Allosterically activated by N-acetylglucosamine 6-phosphate (GlcNAc6P). Functionally, catalyzes the reversible isomerization-deamination of glucosamine 6-phosphate (GlcN6P) to form fructose 6-phosphate (Fru6P) and ammonium ion. This is Glucosamine-6-phosphate deaminase from Enterobacter sp. (strain 638).